Consider the following 260-residue polypeptide: Methyl-coenzyme M reductase subunit gamma (260 aa).

Position 123 (arginine 123) interacts with coenzyme M.

This sequence belongs to the methyl-coenzyme M reductase gamma subunit family. MCR is a hexamer of two alpha, two beta, and two gamma chains, forming a dimer of heterotrimers. It depends on coenzyme F430 as a cofactor.

The protein localises to the cytoplasm. It carries out the reaction coenzyme B + methyl-coenzyme M = methane + coenzyme M-coenzyme B heterodisulfide. The protein operates within one-carbon metabolism; methyl-coenzyme M reduction; methane from methyl-coenzyme M: step 1/1. In terms of biological role, component of the methyl-coenzyme M reductase (MCR) I that catalyzes the reductive cleavage of methyl-coenzyme M (CoM-S-CH3 or 2-(methylthio)ethanesulfonate) using coenzyme B (CoB or 7-mercaptoheptanoylthreonine phosphate) as reductant which results in the production of methane and the mixed heterodisulfide of CoB and CoM (CoM-S-S-CoB). This is the final step in methanogenesis. The chain is Methyl-coenzyme M reductase subunit gamma (mcrG) from Methanococcus vannielii.